Consider the following 382-residue polypeptide: Mannitol-1-phosphate 5-dehydrogenase (382 aa).

3–14 serves as a coordination point for NAD(+); sequence VLHFGAGNIGRG.

The protein belongs to the mannitol dehydrogenase family.

It carries out the reaction D-mannitol 1-phosphate + NAD(+) = beta-D-fructose 6-phosphate + NADH + H(+). The sequence is that of Mannitol-1-phosphate 5-dehydrogenase from Sodalis glossinidius (strain morsitans).